The primary structure comprises 78 residues: Large ribosomal subunit protein uL29 (78 aa).

This sequence belongs to the universal ribosomal protein uL29 family.

In Crocosphaera subtropica (strain ATCC 51142 / BH68) (Cyanothece sp. (strain ATCC 51142)), this protein is Large ribosomal subunit protein uL29.